The sequence spans 629 residues: tRNA uridine 5-carboxymethylaminomethyl modification enzyme MnmG (629 aa).

Residues 13–18 (GGGHAG), Val125, and Ser180 contribute to the FAD site. 273-287 (GPRYCPSIEDKVMRF) serves as a coordination point for NAD(+). Position 370 (Gln370) interacts with FAD.

It belongs to the MnmG family. As to quaternary structure, homodimer. Heterotetramer of two MnmE and two MnmG subunits. FAD serves as cofactor.

Its subcellular location is the cytoplasm. Functionally, NAD-binding protein involved in the addition of a carboxymethylaminomethyl (cmnm) group at the wobble position (U34) of certain tRNAs, forming tRNA-cmnm(5)s(2)U34. This Aliivibrio fischeri (strain ATCC 700601 / ES114) (Vibrio fischeri) protein is tRNA uridine 5-carboxymethylaminomethyl modification enzyme MnmG.